We begin with the raw amino-acid sequence, 55 residues long: Large ribosomal subunit protein bL33 (55 aa).

The protein belongs to the bacterial ribosomal protein bL33 family.

In Paenarthrobacter aurescens (strain TC1), this protein is Large ribosomal subunit protein bL33.